A 136-amino-acid polypeptide reads, in one-letter code: Large ribosomal subunit protein uL16 (136 aa).

This sequence belongs to the universal ribosomal protein uL16 family. As to quaternary structure, part of the 50S ribosomal subunit.

In terms of biological role, binds 23S rRNA and is also seen to make contacts with the A and possibly P site tRNAs. This chain is Large ribosomal subunit protein uL16, found in Rickettsia prowazekii (strain Madrid E).